The chain runs to 138 residues: Acidic phospholipase A2 daboiatoxin A chain (138 aa).

The N-terminal stretch at Met-1 to Gly-16 is a signal peptide. 7 disulfide bridges follow: Cys-42–Cys-131, Cys-44–Cys-60, Cys-59–Cys-111, Cys-65–Cys-138, Cys-66–Cys-104, Cys-73–Cys-97, and Cys-91–Cys-102. Ca(2+) contacts are provided by Tyr-43, Gly-45, and Gly-47. His-63 is a catalytic residue. Asp-64 lines the Ca(2+) pocket. Asp-105 is an active-site residue.

It belongs to the phospholipase A2 family. Group II subfamily. D49 sub-subfamily. As to quaternary structure, heterodimer of A and B chain; non-covalently linked. The acidic protein (B chain) has phospholipase A2 activity and the A chain weakly inhibits the B chain enzymatic activity but potentiates its lethal potency. Ca(2+) is required as a cofactor. In terms of tissue distribution, expressed by the venom gland.

The protein resides in the secreted. It carries out the reaction a 1,2-diacyl-sn-glycero-3-phosphocholine + H2O = a 1-acyl-sn-glycero-3-phosphocholine + a fatty acid + H(+). Heterodimer (A and B chains): phospholipase A2 that acts as a presynaptic neurotoxin and shows a PLA2 activity of 1377 umol/min/mg. In vivo, induces edema and produces neurotoxic symptoms in mice. Also exhibits indirect hemolysis, a strong myonecrotic activity and cytotoxicity. PLA2 catalyzes the calcium-dependent hydrolysis of the 2-acyl groups in 3-sn-phosphoglycerides. Its function is as follows. Monomer: Snake venom phospholipase A2 (PLA2) that shows a PLA2 activity of 578 umol/min/mg. The protein is Acidic phospholipase A2 daboiatoxin A chain of Daboia siamensis (Eastern Russel's viper).